The following is a 96-amino-acid chain: Small ribosomal subunit protein bS18 (96 aa).

It belongs to the bacterial ribosomal protein bS18 family. As to quaternary structure, part of the 30S ribosomal subunit. Forms a tight heterodimer with protein bS6.

In terms of biological role, binds as a heterodimer with protein bS6 to the central domain of the 16S rRNA, where it helps stabilize the platform of the 30S subunit. The polypeptide is Small ribosomal subunit protein bS18 (Borreliella burgdorferi (strain ATCC 35210 / DSM 4680 / CIP 102532 / B31) (Borrelia burgdorferi)).